Here is a 283-residue protein sequence, read N- to C-terminus: Pantothenate synthetase (283 aa).

An ATP-binding site is contributed by 30-37 (MGNLHDGH). Catalysis depends on His-37, which acts as the Proton donor. Gln-61 serves as a coordination point for (R)-pantoate. Residue Gln-61 coordinates beta-alanine. ATP is bound at residue 149–152 (GEKD). Residue Gln-155 participates in (R)-pantoate binding. 186-189 (LSSR) is an ATP binding site.

This sequence belongs to the pantothenate synthetase family. As to quaternary structure, homodimer.

The protein resides in the cytoplasm. The enzyme catalyses (R)-pantoate + beta-alanine + ATP = (R)-pantothenate + AMP + diphosphate + H(+). Its pathway is cofactor biosynthesis; (R)-pantothenate biosynthesis; (R)-pantothenate from (R)-pantoate and beta-alanine: step 1/1. Catalyzes the condensation of pantoate with beta-alanine in an ATP-dependent reaction via a pantoyl-adenylate intermediate. In Shigella sonnei (strain Ss046), this protein is Pantothenate synthetase.